The sequence spans 157 residues: UPF0262 protein RHE_CH00582 (157 aa).

It belongs to the UPF0262 family.

This chain is UPF0262 protein RHE_CH00582, found in Rhizobium etli (strain ATCC 51251 / DSM 11541 / JCM 21823 / NBRC 15573 / CFN 42).